Consider the following 333-residue polypeptide: Chemokine XC receptor 1 (333 aa).

Over 1-31 (MESSGNPESTTFFYYDLQSQPCENQAWVFAT) the chain is Extracellular. A helical transmembrane segment spans residues 32-59 (LATTVLYCLVFLLSLVGNSLVLWVLVKY). Residues 60–69 (ESLESLTNIF) lie on the Cytoplasmic side of the membrane. The chain crosses the membrane as a helical span at residues 70–89 (ILNLCLSDLVFACLLPVWIS). Residues 90-103 (PYHWGWVLGDFLCK) are Extracellular-facing. An intrachain disulfide couples C102 to C175. Residues 104-125 (LLNMIFSISLYSSIFFLTIMTI) traverse the membrane as a helical segment. Topologically, residues 126–142 (HRYLSVVSPLSTLRVPT) are cytoplasmic. A helical membrane pass occupies residues 143-167 (LRCRVLVTMAVWVASILSSILDTIF). Over 168-190 (HKVLSSGCDYSELTWYLTSVYQH) the chain is Extracellular. Residues 191 to 209 (NLFFLLSLGIILFCYVEIL) traverse the membrane as a helical segment. Residues 210–225 (RTLFRSRSKRRHRTVK) are Cytoplasmic-facing. The helical transmembrane segment at 226-250 (LIFAIVVAYFLSWGPYNFTLFLQTL) threads the bilayer. At 251–267 (FRTQIIRSCEAKQQLEY) the chain is on the extracellular side. Residues 268-291 (ALLICRNLAFSHCCFNPVLYVFVG) form a helical membrane-spanning segment. At 292-333 (VKFRTHLKHVLRQFWFCRLQAPSPASIPHSPGAFAYEGASFY) the chain is on the cytoplasmic side.

The protein belongs to the G-protein coupled receptor 1 family.

It localises to the cell membrane. In terms of biological role, receptor for chemokines SCYC1 and SCYC2. Subsequently transduces a signal by increasing the intracellular calcium ions level. Receptor for XCL1/Lymphotactin. The protein is Chemokine XC receptor 1 (XCR1) of Homo sapiens (Human).